We begin with the raw amino-acid sequence, 490 residues long: Probable cytosol aminopeptidase (490 aa).

Residues lysine 257 and aspartate 262 each contribute to the Mn(2+) site. The active site involves lysine 269. Positions 281, 341, and 343 each coordinate Mn(2+). Arginine 345 is a catalytic residue.

It belongs to the peptidase M17 family. Mn(2+) is required as a cofactor.

The protein localises to the cytoplasm. The catalysed reaction is Release of an N-terminal amino acid, Xaa-|-Yaa-, in which Xaa is preferably Leu, but may be other amino acids including Pro although not Arg or Lys, and Yaa may be Pro. Amino acid amides and methyl esters are also readily hydrolyzed, but rates on arylamides are exceedingly low.. It carries out the reaction Release of an N-terminal amino acid, preferentially leucine, but not glutamic or aspartic acids.. In terms of biological role, presumably involved in the processing and regular turnover of intracellular proteins. Catalyzes the removal of unsubstituted N-terminal amino acids from various peptides. This is Probable cytosol aminopeptidase from Prochlorococcus marinus (strain AS9601).